The chain runs to 740 residues: NAD(P)H-quinone oxidoreductase subunit 5, chloroplastic (740 aa).

The next 16 helical transmembrane spans lie at 9 to 29, 40 to 60, 89 to 109, 125 to 145, 147 to 167, 185 to 205, 221 to 241, 258 to 278, 283 to 303, 327 to 347, 354 to 374, 396 to 416, 425 to 445, 547 to 567, 606 to 626, and 718 to 738; these read WIIP…LLLF, WSFL…YLSI, IDPL…LVLI, FAYM…SNLI, IYFF…FWFT, GDFG…SFEF, VNLL…IAKS, TPIS…FLVA, LFIV…ITIL, LGYM…FHLI, ALLF…VGYS, TAFL…CFWS, LLFS…TAFY, ILFP…IGIP, FSVS…KPFY, and ISSY…FLKI.

The protein belongs to the complex I subunit 5 family. In terms of assembly, NDH is composed of at least 16 different subunits, 5 of which are encoded in the nucleus.

It localises to the plastid. Its subcellular location is the chloroplast thylakoid membrane. It catalyses the reaction a plastoquinone + NADH + (n+1) H(+)(in) = a plastoquinol + NAD(+) + n H(+)(out). The enzyme catalyses a plastoquinone + NADPH + (n+1) H(+)(in) = a plastoquinol + NADP(+) + n H(+)(out). NDH shuttles electrons from NAD(P)H:plastoquinone, via FMN and iron-sulfur (Fe-S) centers, to quinones in the photosynthetic chain and possibly in a chloroplast respiratory chain. The immediate electron acceptor for the enzyme in this species is believed to be plastoquinone. Couples the redox reaction to proton translocation, and thus conserves the redox energy in a proton gradient. The protein is NAD(P)H-quinone oxidoreductase subunit 5, chloroplastic (ndhF) of Aethionema cordifolium (Lebanon stonecress).